Consider the following 418-residue polypeptide: Zinc metalloproteinase nas-8 (418 aa).

The first 28 residues, 1–28, serve as a signal peptide directing secretion; the sequence is MMNRASLCRIAVLLCILHLSHLIDSTYA. A propeptide spanning residues 29–100 is cleaved from the precursor; that stretch reads QSYLTEKDFL…TSKLKSGVRR (72 aa). Residues 101 to 296 enclose the Peptidase M12A domain; it reads NGVTSVIKRW…LKINKLYNCP (196 aa). Cystine bridges form between C143–C295, C165–C184, C347–C381, C354–C374, and C361–C378. H192 contacts Zn(2+). Residue E193 is part of the active site. Zn(2+) is bound by residues H196 and H202. The 35-residue stretch at 347–381 folds into the ShKT domain; sequence CSDRTNLCWRWLDRCRSYFFEKIMKEFCALSCGYC.

The cofactor is Zn(2+).

The protein localises to the secreted. It catalyses the reaction Hydrolysis of peptide bonds in substrates containing five or more amino acids, preferentially with Ala in P1', and Pro in P2'.. Inhibited by ethylene glycol-bis(2-aminoethylether)-N,N,N,N-tetraacetic acid (EGTA), ethylenediaminetetraacetic acid (EDTA) and o-phenanthroline. In terms of biological role, metalloprotease. This is Zinc metalloproteinase nas-8 from Steinernema carpocapsae (Entomopathogenic nematode).